The following is a 342-amino-acid chain: Isopentenyl-diphosphate delta-isomerase (342 aa).

Arginine 11–lysine 12 contacts substrate. Residues serine 68, serine 69 to threonine 71, serine 99, and asparagine 127 contribute to the FMN site. Position 99–101 (serine 99–arginine 101) interacts with substrate. Glutamate 163 lines the Mg(2+) pocket. Residues lysine 194, threonine 224, and alanine 295–glycine 296 each bind FMN.

The protein belongs to the IPP isomerase type 2 family. In terms of assembly, homooctamer. Dimer of tetramers. Requires FMN as cofactor. The cofactor is NADPH. Mg(2+) is required as a cofactor.

It is found in the cytoplasm. It catalyses the reaction isopentenyl diphosphate = dimethylallyl diphosphate. In terms of biological role, involved in the biosynthesis of isoprenoids. Catalyzes the 1,3-allylic rearrangement of the homoallylic substrate isopentenyl (IPP) to its allylic isomer, dimethylallyl diphosphate (DMAPP). The protein is Isopentenyl-diphosphate delta-isomerase of Rickettsia prowazekii (strain Madrid E).